Consider the following 171-residue polypeptide: 3-hydroxydecanoyl-[acyl-carrier-protein] dehydratase (171 aa).

His70 is an active-site residue.

Belongs to the thioester dehydratase family. FabA subfamily. Homodimer.

The protein localises to the cytoplasm. The enzyme catalyses a (3R)-hydroxyacyl-[ACP] = a (2E)-enoyl-[ACP] + H2O. The catalysed reaction is (3R)-hydroxydecanoyl-[ACP] = (2E)-decenoyl-[ACP] + H2O. It carries out the reaction (2E)-decenoyl-[ACP] = (3Z)-decenoyl-[ACP]. It functions in the pathway lipid metabolism; fatty acid biosynthesis. Its function is as follows. Necessary for the introduction of cis unsaturation into fatty acids. Catalyzes the dehydration of (3R)-3-hydroxydecanoyl-ACP to E-(2)-decenoyl-ACP and then its isomerization to Z-(3)-decenoyl-ACP. Can catalyze the dehydratase reaction for beta-hydroxyacyl-ACPs with saturated chain lengths up to 16:0, being most active on intermediate chain length. The chain is 3-hydroxydecanoyl-[acyl-carrier-protein] dehydratase from Shewanella sediminis (strain HAW-EB3).